Here is a 359-residue protein sequence, read N- to C-terminus: Peptide chain release factor 1 (359 aa).

Q238 is modified (N5-methylglutamine).

The protein belongs to the prokaryotic/mitochondrial release factor family. In terms of processing, methylated by PrmC. Methylation increases the termination efficiency of RF1.

It localises to the cytoplasm. Functionally, peptide chain release factor 1 directs the termination of translation in response to the peptide chain termination codons UAG and UAA. This chain is Peptide chain release factor 1, found in Mycoplasmopsis pulmonis (strain UAB CTIP) (Mycoplasma pulmonis).